Consider the following 89-residue polypeptide: Defensin-like protein 108 (89 aa).

The signal sequence occupies residues 1 to 20; the sequence is MTSLIAFLFTVLVIVSSVHC. 4 disulfides stabilise this stretch: Cys39-Cys81, Cys49-Cys71, Cys57-Cys79, and Cys61-Cys80.

Belongs to the DEFL family.

The protein localises to the secreted. The polypeptide is Defensin-like protein 108 (LCR51) (Arabidopsis thaliana (Mouse-ear cress)).